The chain runs to 435 residues: Transcription activator ACTTR (435 aa).

A DNA-binding region (zn(2)-C6 fungal-type) is located at residues 16–43 (CDFCTQSKLRCNKNKPSCRRCTIQQQPC). The tract at residues 48 to 89 (ARRTGRPPKRPRKANDGQEANEQHGDQDPVTSTPGGSCQQQS) is disordered. The segment covering 50-59 (RTGRPPKRPR) has biased composition (basic residues). Residues 60 to 74 (KANDGQEANEQHGDQ) show a composition bias toward basic and acidic residues. The segment covering 76-89 (PVTSTPGGSCQQQS) has biased composition (polar residues).

The protein resides in the nucleus. Functionally, transcription factor that regulates the expression of the gene clusters that mediate the biosynthesis of the host-selective toxins (HSTs) ACT-toxins responsible for brown spot of tangerine disease by the tangerine pathotype which affects tangerines and mandarins. ACT-toxins consist of three moieties, 9,10-epoxy-8-hydroxy-9-methyl-decatrienoic acid (EDA), valine and a polyketide. ACT-toxin I is toxic to both citrus and pear; toxin II the 5''-deoxy derivative of ACT-toxin I, is highly toxic to pear and slightly toxic to citrus. On cellular level, ACT-toxins affect plasma membrane of susceptible cells and cause a sudden increase in loss of K(+) after a few minutes of toxin treatment. The chain is Transcription activator ACTTR from Alternaria alternata (Alternaria rot fungus).